The chain runs to 1430 residues: ABC transporter eupT (1430 aa).

The segment at 1 to 26 is disordered; that stretch reads MAPAIDSTVNDLQPNTPNPEKALSSQ. Positions 112–368 constitute an ABC transporter 1 domain; that stretch reads LALPAMIRQL…FVNLGFECPA (257 aa). A glycan (N-linked (GlcNAc...) asparagine) is linked at Asn-292. Helical transmembrane passes span 476–496, 511–531, 557–577, 586–606, and 620–640; these read WPAVWVMVGNTIMALIMSSLF, VVLFMAILFNAFSSILEVMTL, VLVDMPMKITSTISFNLVFYF, GNFFFYLLVVFLIVLAMSGVF, and MVPASVLMLALLIFTGFVVPV. Asn-684 carries an N-linked (GlcNAc...) asparagine glycan. A helical transmembrane segment spans residues 707-727; it reads VGIIIAMVIFNYLMYFIASEY. Positions 789-1032 constitute an ABC transporter 2 domain; the sequence is FHWNNVCYDL…TLIDYFERNG (244 aa). 825-832 contacts ATP; it reads GVSGAGKT. Asn-1019 is a glycosylation site (N-linked (GlcNAc...) asparagine). Transmembrane regions (helical) follow at residues 1133-1153, 1213-1233, 1249-1269, 1278-1298, 1305-1325, and 1400-1420; these read ITLCIATSLFIGLVFFNAPLS, LPWSTLASVFMWALFYYPIGF, LMWLLFWQFLVWVSTFTHMCI, GGNIANFLFVLAFFFCGVLAS, FWIFLYRASPLSYWVSAVLST, and FGILWVYIGFNIAAALALYWI.

The protein belongs to the ABC transporter superfamily. ABCG family. PDR (TC 3.A.1.205) subfamily.

Its subcellular location is the cell membrane. In terms of biological role, ABC transporter; part of the gene cluster that mediates the biosynthesis of eupenifeldin, a bistropolone meroterpenoid that acts as an antitumor agent. The chain is ABC transporter eupT from Phoma sp.